Reading from the N-terminus, the 252-residue chain is uncharacterized protein (252 aa).

It belongs to the LarE family.

This is an uncharacterized protein from Methanocaldococcus jannaschii (strain ATCC 43067 / DSM 2661 / JAL-1 / JCM 10045 / NBRC 100440) (Methanococcus jannaschii).